Here is a 175-residue protein sequence, read N- to C-terminus: ATP synthase subunit d, mitochondrial (175 aa).

An N-acetylserine modification is found at S2.

The protein belongs to the ATPase d subunit family.

Its subcellular location is the mitochondrion inner membrane. Its function is as follows. Mitochondrial membrane ATP synthase (F(1)F(0) ATP synthase or Complex V) produces ATP from ADP in the presence of a proton gradient across the membrane which is generated by electron transport complexes of the respiratory chain. F-type ATPases consist of two structural domains, F(1) - containing the extramembraneous catalytic core, and F(0) - containing the membrane proton channel, linked together by a central stalk and a peripheral stalk. During catalysis, ATP synthesis in the catalytic domain of F(1) is coupled via a rotary mechanism of the central stalk subunits to proton translocation. Part of the complex F(0) domain and the peripheric stalk, which acts as a stator to hold the catalytic alpha(3)beta(3) subcomplex and subunit a/ATP6 static relative to the rotary elements. This chain is ATP synthase subunit d, mitochondrial (atp7), found in Schizosaccharomyces pombe (strain 972 / ATCC 24843) (Fission yeast).